The following is a 334-amino-acid chain: Ribosomal RNA small subunit methyltransferase H (334 aa).

Residues 53 to 55, Asp-72, Phe-99, Asp-122, and His-129 contribute to the S-adenosyl-L-methionine site; that span reads GGH.

It belongs to the methyltransferase superfamily. RsmH family.

The protein resides in the cytoplasm. The catalysed reaction is cytidine(1402) in 16S rRNA + S-adenosyl-L-methionine = N(4)-methylcytidine(1402) in 16S rRNA + S-adenosyl-L-homocysteine + H(+). Specifically methylates the N4 position of cytidine in position 1402 (C1402) of 16S rRNA. The polypeptide is Ribosomal RNA small subunit methyltransferase H (Leptospira interrogans serogroup Icterohaemorrhagiae serovar copenhageni (strain Fiocruz L1-130)).